A 682-amino-acid polypeptide reads, in one-letter code: Potassium-transporting ATPase ATP-binding subunit (682 aa).

4 consecutive transmembrane segments (helical) span residues Pro-34–Ala-54, Ala-62–Ala-82, Ile-219–Leu-239, and Val-254–Ile-274. Asp-307 functions as the 4-aspartylphosphate intermediate in the catalytic mechanism. Residues Asp-344, Glu-348, Phe-377–Ser-384, and Lys-395 each bind ATP. Positions 518 and 522 each coordinate Mg(2+). Helical transmembrane passes span Phe-588–Met-608, Ala-616–Leu-636, and Ile-656–Leu-676.

Belongs to the cation transport ATPase (P-type) (TC 3.A.3) family. Type IA subfamily. The system is composed of three essential subunits: KdpA, KdpB and KdpC.

The protein resides in the cell inner membrane. The catalysed reaction is K(+)(out) + ATP + H2O = K(+)(in) + ADP + phosphate + H(+). Part of the high-affinity ATP-driven potassium transport (or Kdp) system, which catalyzes the hydrolysis of ATP coupled with the electrogenic transport of potassium into the cytoplasm. This subunit is responsible for energy coupling to the transport system and for the release of the potassium ions to the cytoplasm. The sequence is that of Potassium-transporting ATPase ATP-binding subunit from Shigella boydii serotype 18 (strain CDC 3083-94 / BS512).